A 43-amino-acid polypeptide reads, in one-letter code: Potassium channel toxin gamma-KTx 3.2 (43 aa).

Intrachain disulfides connect Cys-5–Cys-23, Cys-11–Cys-34, Cys-20–Cys-39, and Cys-24–Cys-41.

This sequence belongs to the ergtoxin family. Gamma-KTx 3 subfamily. As to expression, expressed by the venom gland.

Its subcellular location is the secreted. In terms of biological role, blocks Kv11/ERG potassium channels. The sequence is that of Potassium channel toxin gamma-KTx 3.2 from Centruroides elegans (Bark scorpion).